The primary structure comprises 617 residues: Diacylglycerol O-acyltransferase 1 (617 aa).

Disordered regions lie at residues 1–52 and 95–186; these read MEPI…ETER and RNTN…PKQE. Residues 7–17 show a composition bias toward polar residues; sequence SNGNKNNSMDK. Low complexity-rich tracts occupy residues 18 to 34 and 96 to 105; these read QPQQ…QQQQ and NTNNNNQNNT. The span at 106 to 140 shows a compositional bias: polar residues; that stretch reads SPTFSSANGKQSNLTQRKINTQIQSKQPTNNNVQP. The segment covering 160–177 has biased composition (low complexity); sequence QNNNGNNNNNNNNNNNNN. The next 5 helical transmembrane spans lie at 217–237, 254–274, 306–326, 399–419, and 449–469; these read LLLI…HLLY, WPGV…YLIE, IIAF…ICTF, IVEA…YMLP, and YVWL…VAEI. The short motif at 477 to 483 is the FYXDWWN motif element; the sequence is FYRDWWN. Helical transmembrane passes span 520–540, 545–565, and 570–590; these read GYFM…SIPF, LWGF…KNLM, and LGNV…VLLY. The active site involves H532.

This sequence belongs to the membrane-bound acyltransferase family. Sterol o-acyltransferase subfamily.

It is found in the endoplasmic reticulum membrane. It carries out the reaction an acyl-CoA + a 1,2-diacyl-sn-glycerol = a triacyl-sn-glycerol + CoA. The catalysed reaction is all-trans-retinol + an acyl-CoA = an all-trans-retinyl ester + CoA. The enzyme catalyses 2-(9Z-octadecenoyl)-glycerol + (9Z)-octadecenoyl-CoA = 1,2-di-(9Z-octadecenoyl)-sn-glycerol + CoA. It catalyses the reaction 1,2-di-(9Z-octadecenoyl)-sn-glycerol + (9Z)-octadecenoyl-CoA = 1,2,3-tri-(9Z-octadecenoyl)-glycerol + CoA. It carries out the reaction all-trans-retinol + hexadecanoyl-CoA = all-trans-retinyl hexadecanoate + CoA. The catalysed reaction is 1-O-(9Z-octadecenyl)-glycerol + (9Z)-octadecenoyl-CoA = 1-O-(9Z-octadecyl)-3-(9Z-octadecenoyl)-glycerol + CoA. The enzyme catalyses 1-O-(9Z-octadecyl)-3-(9Z-octadecenoyl)-glycerol + (9Z)-octadecenoyl-CoA = 1-O-(9Z-octadecenyl)-2,3-di-(9Z-octadecenoyl)glycerol + CoA. It catalyses the reaction 1-(9Z-octadecenoyl)-glycerol + (9Z)-octadecenoyl-CoA = 1,2-di-(9Z-octadecenoyl)-glycerol + CoA. It carries out the reaction 1,2-di-(9Z-octadecenoyl)-glycerol + (9Z)-octadecenoate + H(+) = 1,2,3-tri-(9Z-octadecenoyl)-glycerol + H2O. The catalysed reaction is 1-octadecanoyl-2-(5Z,8Z,11Z,14Z-eicosatetraenoyl)-sn-glycerol + (9Z)-octadecenoyl-CoA = 1-octadecanoyl-2-(5Z,8Z,11Z,14Z)-eicosatetraenoyl-3-(9Z)-octadecenoyl-sn-glycerol + CoA. The enzyme catalyses hexadecane-1,2-diol + 2 hexadecanoyl-CoA = 1,2-O,O-dihexadecanoyl-1,2-hexadecanediol + 2 CoA. It catalyses the reaction hexadecane-1,2-diol + hexadecanoyl-CoA = 2-hydroxyhexadecyl hexadecanoate + CoA. It carries out the reaction 2-(9Z-octadecenoyl)-glycerol + hexadecanoyl-CoA = 1-hexadecanoyl-2-(9Z-octadecenoyl)-sn-glycerol + CoA. The catalysed reaction is 1,2-di-(9Z-octadecenoyl)-sn-glycerol + hexadecanoyl-CoA = 1,2-di-(9Z)-octadecenoyl-3-hexadecanoyl-sn-glycerol + CoA. The enzyme catalyses hexadecan-1-ol + hexadecanoyl-CoA = hexadecanyl hexadecanoate + CoA. It catalyses the reaction 13-cis-retinol + hexadecanoyl-CoA = 13-cis-retinyl hexadecanoate + CoA. It carries out the reaction 1,3-di-(9Z-octadecenoyl)-glycerol + (9Z)-octadecenoyl-CoA = 1,2,3-tri-(9Z-octadecenoyl)-glycerol + CoA. The catalysed reaction is 2,3-di-(9Z)-octadecenoyl-sn-glycerol + (9Z)-octadecenoyl-CoA = 1,2,3-tri-(9Z-octadecenoyl)-glycerol + CoA. The protein operates within lipid metabolism; glycerolipid metabolism. In terms of biological role, catalyzes the terminal and only committed step in triacylglycerol synthesis by using diacylglycerol and fatty acyl CoA as substrates. This Dictyostelium discoideum (Social amoeba) protein is Diacylglycerol O-acyltransferase 1 (dgat1).